Here is a 105-residue protein sequence, read N- to C-terminus: TMEM14 protein homolog YJR085C (105 aa).

A run of 3 helical transmembrane segments spans residues 26-46 (IPSL…GYLL), 53-73 (GLEM…IRGM), and 77-97 (FTKP…YYYY).

Belongs to the TMEM14 family.

It is found in the mitochondrion. The protein resides in the membrane. This Saccharomyces cerevisiae (strain ATCC 204508 / S288c) (Baker's yeast) protein is TMEM14 protein homolog YJR085C.